Consider the following 1154-residue polypeptide: Nitric oxide synthase, inducible (1154 aa).

A disordered region spans residues 22–58 (KDINNNVEKPPGATPSPSTQDDLKNHKHHNDSPQPLT). Positions 23–27 (DINNN) match the DINNN-motif; mediates interaction with SPSB1, SPSB2 and SPSB4 motif. 2 residues coordinate Zn(2+): Cys107 and Cys112. Residue Cys197 participates in heme b binding. Residues Gln260, Trp369, Tyr370, and Glu374 each coordinate L-arginine. Arg378, Ile459, Trp460, and Phe473 together coordinate (6R)-L-erythro-5,6,7,8-tetrahydrobiopterin. Heme b is bound at residue Tyr488. Residues 512 to 532 (LKVLVKAVLFASMLMRKTMAS) form a calmodulin-binding region. A Flavodoxin-like domain is found at 536 to 674 (VTILFATETG…AFRCWAVQTF (139 aa)). Residues Thr542, Glu543, Thr544, Lys546, and Ser547 each contribute to the FMN site. A Phosphotyrosine modification is found at Tyr572. Residues Ser588, Thr589, Ser625, Cys632, and Glu658 each contribute to the FMN site. Residues 727 to 967 (KNVFTLRLKS…VRSAGNFKLP (241 aa)) enclose the FAD-binding FR-type domain. Arg747 contributes to the NADP(+) binding site. Residues His769, Arg903, Tyr905, Ser906, Thr921, Ala923, Tyr927, Val940, Cys941, and Ser942 each contribute to the FAD site. NADP(+) is bound by residues Thr981, Arg1014, Ser1043, Arg1044, Lys1050, Tyr1052, Gln1054, and Asp1087.

Belongs to the NOS family. Homodimer. Interacts with NHERF1. Interacts with GAPDH; induced by oxidatively-modified low-densitity lipoprotein (LDL(ox)). Interacts with S100A8 and S100A9 to form the iNOS-S100A8/9 transnitrosylase complex. Interacts with SPSB1, SPSB2 and SPSB4. Interacts with ELOC and CUL5 in the presence of SPSB1 or SPSB2 or SPSB4. Forms a complex with ASL, ASS1 and HSP90AA1; the complex regulates cell-autonomous L-arginine synthesis and citrulline recycling while channeling extracellular L-arginine to nitric oxide synthesis pathway. Heme b serves as cofactor. It depends on FAD as a cofactor. FMN is required as a cofactor. The cofactor is (6R)-L-erythro-5,6,7,8-tetrahydrobiopterin. Polyubiquitinated; mediated by SPSB1, SPSB2 and SPSB4, leading to proteasomal degradation.

It is found in the cytoplasm. The protein resides in the cytosol. The catalysed reaction is 2 L-arginine + 3 NADPH + 4 O2 + H(+) = 2 L-citrulline + 2 nitric oxide + 3 NADP(+) + 4 H2O. Its activity is regulated as follows. Regulated by calcium/calmodulin. Its function is as follows. Produces nitric oxide (NO) which is a messenger molecule with diverse functions throughout the body. In macrophages, NO mediates tumoricidal and bactericidal actions. Also has nitrosylase activity and mediates cysteine S-nitrosylation of cytoplasmic target proteins such PTGS2/COX2. As component of the iNOS-S100A8/9 transnitrosylase complex involved in the selective inflammatory stimulus-dependent S-nitrosylation of GAPDH implicated in regulation of the GAIT complex activity and probably multiple targets including ANXA5, EZR, MSN and VIM. Involved in inflammation, enhances the synthesis of pro-inflammatory mediators such as IL6 and IL8. This is Nitric oxide synthase, inducible (NOS2) from Canis lupus familiaris (Dog).